The primary structure comprises 81 residues: MNPLISAASVIAAGLAVGLASIGPGVGQGTAAGQAVEGIARQPEAEGKIRGTLLLSLAFMEALTIYGLVVALALPFANPFV.

Helical transmembrane passes span 3-23 (PLIS…ASIG) and 53-73 (LLLS…VALA).

Belongs to the ATPase C chain family. F-type ATPases have 2 components, F(1) - the catalytic core - and F(0) - the membrane proton channel. F(1) has five subunits: alpha(3), beta(3), gamma(1), delta(1), epsilon(1). F(0) has four main subunits: a(1), b(1), b'(1) and c(10-14). The alpha and beta chains form an alternating ring which encloses part of the gamma chain. F(1) is attached to F(0) by a central stalk formed by the gamma and epsilon chains, while a peripheral stalk is formed by the delta, b and b' chains.

The protein localises to the plastid. It is found in the chloroplast thylakoid membrane. In terms of biological role, f(1)F(0) ATP synthase produces ATP from ADP in the presence of a proton or sodium gradient. F-type ATPases consist of two structural domains, F(1) containing the extramembraneous catalytic core and F(0) containing the membrane proton channel, linked together by a central stalk and a peripheral stalk. During catalysis, ATP synthesis in the catalytic domain of F(1) is coupled via a rotary mechanism of the central stalk subunits to proton translocation. Its function is as follows. Key component of the F(0) channel; it plays a direct role in translocation across the membrane. A homomeric c-ring of between 10-14 subunits forms the central stalk rotor element with the F(1) delta and epsilon subunits. The protein is ATP synthase subunit c, chloroplastic of Huperzia lucidula (Shining clubmoss).